Consider the following 585-residue polypeptide: Formate--tetrahydrofolate ligase (585 aa).

65–72 contributes to the ATP binding site; it reads TPHGEGKT.

Belongs to the formate--tetrahydrofolate ligase family.

The enzyme catalyses (6S)-5,6,7,8-tetrahydrofolate + formate + ATP = (6R)-10-formyltetrahydrofolate + ADP + phosphate. The protein operates within one-carbon metabolism; tetrahydrofolate interconversion. The chain is Formate--tetrahydrofolate ligase from Shewanella baltica (strain OS195).